Consider the following 339-residue polypeptide: Serpentine receptor class gamma-7 (339 aa).

7 helical membrane passes run 30–50, 65–85, 98–118, 152–172, 200–220, 239–259, and 268–288; these read YWIQCLWLIPTLFLLVWIIIT, WILTADCVVSIILILLDLFVV, FSTIFINYPIISDIYFPIYNY, IPLFLTIICILPILVVWNTVI, LHLTFIFVSISFILISSLLLM, SIFIIVAFFFQAAFQSFYAFF, and FLVDFQFIIYDVMTVGYPLIF. The interval 319-339 is disordered; sequence PFNNTMPRQESPSPNYDSILA.

This sequence belongs to the nematode receptor-like protein srg family.

It localises to the membrane. The protein is Serpentine receptor class gamma-7 (srg-7) of Caenorhabditis elegans.